A 475-amino-acid polypeptide reads, in one-letter code: Ribulose bisphosphate carboxylase large chain (475 aa).

Residues 1–2 constitute a propeptide that is removed on maturation; sequence MS. The residue at position 3 (P3) is an N-acetylproline. An N6,N6,N6-trimethyllysine modification is found at K14. Positions 123 and 173 each coordinate substrate. K175 serves as the catalytic Proton acceptor. K177 is a substrate binding site. Positions 201, 203, and 204 each coordinate Mg(2+). K201 bears the N6-carboxylysine mark. The active-site Proton acceptor is H294. Substrate is bound by residues R295, H327, and S379.

This sequence belongs to the RuBisCO large chain family. Type I subfamily. In terms of assembly, heterohexadecamer of 8 large chains and 8 small chains; disulfide-linked. The disulfide link is formed within the large subunit homodimers. It depends on Mg(2+) as a cofactor. Post-translationally, the disulfide bond which can form in the large chain dimeric partners within the hexadecamer appears to be associated with oxidative stress and protein turnover.

The protein resides in the plastid. Its subcellular location is the chloroplast. The enzyme catalyses 2 (2R)-3-phosphoglycerate + 2 H(+) = D-ribulose 1,5-bisphosphate + CO2 + H2O. It catalyses the reaction D-ribulose 1,5-bisphosphate + O2 = 2-phosphoglycolate + (2R)-3-phosphoglycerate + 2 H(+). RuBisCO catalyzes two reactions: the carboxylation of D-ribulose 1,5-bisphosphate, the primary event in carbon dioxide fixation, as well as the oxidative fragmentation of the pentose substrate in the photorespiration process. Both reactions occur simultaneously and in competition at the same active site. The sequence is that of Ribulose bisphosphate carboxylase large chain from Lotus japonicus (Lotus corniculatus var. japonicus).